Consider the following 425-residue polypeptide: Histone-binding protein RBBP7 (425 aa).

7 WD repeats span residues 47 to 122, 128 to 173, 181 to 217, 228 to 269, 275 to 312, 318 to 369, and 376 to 403; these read QWLP…KINH, RARY…LRLR, GLSW…KVVD, VVED…HSVD, VNCL…LHSF, EIFQ…LFIH, and ISDF…IWQM.

This sequence belongs to the WD repeat RBAP46/RBAP48/MSI1 family. Binds directly to helix 1 of the histone fold of histone H4, a region that is not accessible when H4 is in chromatin.

The protein resides in the nucleus. Core histone-binding subunit that may target chromatin remodeling factors, histone acetyltransferases and histone deacetylases to their histone substrates in a manner that is regulated by nucleosomal DNA. Component of several complexes which regulate chromatin metabolism. The polypeptide is Histone-binding protein RBBP7 (rbbp7) (Xenopus laevis (African clawed frog)).